The primary structure comprises 209 residues: CASP-like protein 2A1 (209 aa).

At 1-38 the chain is on the cytoplasmic side; the sequence is MSKMAEEKVLAAPATVDGGMQSSGDLQASSAAAARVRP. Residues 39–59 form a helical membrane-spanning segment; it reads VETLLRAAPLGLCVAAMAIML. Topologically, residues 60 to 80 are extracellular; it reads RNSVTNEYGTVSYSDLGGFKY. The chain crosses the membrane as a helical span at residues 81–101; sequence LVYANGLCAAYSLASAFYIAV. Over 102-109 the chain is Cytoplasmic; that stretch reads PRPATLSR. A helical membrane pass occupies residues 110 to 130; the sequence is SWVVFLLDQVFTYLILAAGAA. Topologically, residues 131–163 are extracellular; it reads SAELLYLAYNGDKEVTWSEACGVFGGFCRQART. A helical transmembrane segment spans residues 164–184; sequence SVAITFASVACYILLSLISSY. Residues 185–209 are Cytoplasmic-facing; it reads RLFSAYDPPQPSLGNKGVEIAAFPR.

The protein belongs to the Casparian strip membrane proteins (CASP) family. As to quaternary structure, homodimer and heterodimers.

Its subcellular location is the cell membrane. This Oryza sativa subsp. indica (Rice) protein is CASP-like protein 2A1.